The following is a 207-amino-acid chain: Ribonuclease HII (207 aa).

An RNase H type-2 domain is found at 12–205; sequence GLVVGIDEVG…IRNMIEAEAH (194 aa). D18, E19, and D114 together coordinate a divalent metal cation.

Belongs to the RNase HII family. Requires Mn(2+) as cofactor. Mg(2+) serves as cofactor.

Its subcellular location is the cytoplasm. The enzyme catalyses Endonucleolytic cleavage to 5'-phosphomonoester.. In terms of biological role, endonuclease that specifically degrades the RNA of RNA-DNA hybrids. This chain is Ribonuclease HII, found in Gluconobacter oxydans (strain 621H) (Gluconobacter suboxydans).